The chain runs to 343 residues: Delta(1)-pyrroline-2-carboxylate/Delta(1)-piperideine-2-carboxylate reductase (343 aa).

Residue Ser-53 is the Charge relay system of the active site. Catalysis depends on His-54, which acts as the Proton donor. Substrate is bound at residue Arg-58. 126–130 (HFAAL) serves as a coordination point for NADP(+). Substrate is bound at residue Thr-166. An NADP(+)-binding site is contributed by 184 to 186 (DLA). 192 to 193 (HG) serves as a coordination point for substrate. Residue Asp-194 is the Charge relay system of the active site. NADP(+) is bound by residues 236–237 (HK) and 309–315 (RLPGDRR).

This sequence belongs to the LDH2/MDH2 oxidoreductase family. Homodimer.

It catalyses the reaction L-pipecolate + NADP(+) = Delta(1)-piperideine-2-carboxylate + NADPH + H(+). It carries out the reaction L-proline + NADP(+) = 1-pyrroline-2-carboxylate + NADPH + H(+). The catalysed reaction is N-methyl-L-alanine + NADP(+) + H2O = methylamine + pyruvate + NADPH + H(+). With respect to regulation, is inhibited by the substrate analog pyrrole-2-carboxylate, and by 2-picolinate. Its function is as follows. Catalyzes the reduction of both Delta(1)-pyrroline-2-carboxylate (Pyr2C) and Delta(1)-piperideine-2-carboxylate (Pip2C) to L-proline and L-pipecolate, respectively, using NADPH as the electron donor. Can catalyze the reverse oxidation reactions, albeit at a much lower rate. Is also able to catalyze in vitro the NADPH-dependent formation of N-methylalanine from pyruvate and N-methylamine; can act on other alpha-keto acids and specifically uses methylamine and not ammonia for these reductive amination reactions. Can use NADH instead of NADPH, although with much less efficiency. In Pseudomonas syringae pv. tomato, this protein is Delta(1)-pyrroline-2-carboxylate/Delta(1)-piperideine-2-carboxylate reductase.